A 434-amino-acid polypeptide reads, in one-letter code: Probable tRNA pseudouridine synthase D (434 aa).

The active-site Nucleophile is Asp93. In terms of domain architecture, TRUD spans Gly169–Leu396.

Belongs to the pseudouridine synthase TruD family.

The catalysed reaction is uridine(13) in tRNA = pseudouridine(13) in tRNA. Could be responsible for synthesis of pseudouridine from uracil-13 in transfer RNAs. This Halobacterium salinarum (strain ATCC 29341 / DSM 671 / R1) protein is Probable tRNA pseudouridine synthase D.